Consider the following 284-residue polypeptide: 2-dehydro-3-deoxyphosphooctonate aldolase (284 aa).

The protein belongs to the KdsA family.

It localises to the cytoplasm. The catalysed reaction is D-arabinose 5-phosphate + phosphoenolpyruvate + H2O = 3-deoxy-alpha-D-manno-2-octulosonate-8-phosphate + phosphate. Its pathway is carbohydrate biosynthesis; 3-deoxy-D-manno-octulosonate biosynthesis; 3-deoxy-D-manno-octulosonate from D-ribulose 5-phosphate: step 2/3. It functions in the pathway bacterial outer membrane biogenesis; lipopolysaccharide biosynthesis. In Ralstonia pickettii (strain 12J), this protein is 2-dehydro-3-deoxyphosphooctonate aldolase.